The primary structure comprises 221 residues: 7-cyano-7-deazaguanine synthase (221 aa).

Position 9 to 19 (9 to 19) interacts with ATP; sequence YSGGMDSFTLL. Residues cysteine 185, cysteine 193, cysteine 196, and cysteine 199 each coordinate Zn(2+).

It belongs to the QueC family. Zn(2+) is required as a cofactor.

It catalyses the reaction 7-carboxy-7-deazaguanine + NH4(+) + ATP = 7-cyano-7-deazaguanine + ADP + phosphate + H2O + H(+). It participates in purine metabolism; 7-cyano-7-deazaguanine biosynthesis. Its function is as follows. Catalyzes the ATP-dependent conversion of 7-carboxy-7-deazaguanine (CDG) to 7-cyano-7-deazaguanine (preQ(0)). This is 7-cyano-7-deazaguanine synthase from Marinobacter nauticus (strain ATCC 700491 / DSM 11845 / VT8) (Marinobacter aquaeolei).